The following is a 431-amino-acid chain: Enolase (431 aa).

Residue Gln167 coordinates (2R)-2-phosphoglycerate. Glu209 acts as the Proton donor in catalysis. Residues Asp246, Glu289, and Asp316 each contribute to the Mg(2+) site. 4 residues coordinate (2R)-2-phosphoglycerate: Lys341, Arg370, Ser371, and Lys392. The active-site Proton acceptor is the Lys341.

This sequence belongs to the enolase family. Component of the RNA degradosome, a multiprotein complex involved in RNA processing and mRNA degradation. Requires Mg(2+) as cofactor.

It localises to the cytoplasm. The protein resides in the secreted. It is found in the cell surface. The enzyme catalyses (2R)-2-phosphoglycerate = phosphoenolpyruvate + H2O. The protein operates within carbohydrate degradation; glycolysis; pyruvate from D-glyceraldehyde 3-phosphate: step 4/5. Catalyzes the reversible conversion of 2-phosphoglycerate (2-PG) into phosphoenolpyruvate (PEP). It is essential for the degradation of carbohydrates via glycolysis. The chain is Enolase from Shewanella pealeana (strain ATCC 700345 / ANG-SQ1).